The primary structure comprises 566 residues: Phenylalanine--tRNA ligase beta subunit (566 aa).

The 76-residue stretch at 287-362 folds into the B5 domain; the sequence is YFQEEVEFNV…IGEGLSSFNP (76 aa). Asp-340, Asp-346, Glu-349, and Asp-350 together coordinate Mg(2+).

The protein belongs to the phenylalanyl-tRNA synthetase beta subunit family. Type 2 subfamily. As to quaternary structure, tetramer of two alpha and two beta subunits. Requires Mg(2+) as cofactor.

The protein resides in the cytoplasm. It catalyses the reaction tRNA(Phe) + L-phenylalanine + ATP = L-phenylalanyl-tRNA(Phe) + AMP + diphosphate + H(+). The protein is Phenylalanine--tRNA ligase beta subunit of Borreliella burgdorferi (strain ATCC 35210 / DSM 4680 / CIP 102532 / B31) (Borrelia burgdorferi).